Here is a 315-residue protein sequence, read N- to C-terminus: Ribosomal protein L11 methyltransferase (315 aa).

4 residues coordinate S-adenosyl-L-methionine: Thr-164, Gly-185, Asp-207, and Asn-250.

The protein belongs to the methyltransferase superfamily. PrmA family.

The protein localises to the cytoplasm. It catalyses the reaction L-lysyl-[protein] + 3 S-adenosyl-L-methionine = N(6),N(6),N(6)-trimethyl-L-lysyl-[protein] + 3 S-adenosyl-L-homocysteine + 3 H(+). In terms of biological role, methylates ribosomal protein L11. The sequence is that of Ribosomal protein L11 methyltransferase from Exiguobacterium sibiricum (strain DSM 17290 / CCUG 55495 / CIP 109462 / JCM 13490 / 255-15).